Consider the following 737-residue polypeptide: Transcription activator MSS11 (737 aa).

Residues 1–23 (MDNTTNINTNERSSNTDFSSAPN) form a disordered region. Residues 51–83 (SKQLLYAHIYNYLIKNNYWNSAAKFLSEADLPL) form the LisH domain. Disordered regions lie at residues 191–220 (TQNS…TNRN), 268–347 (LQSP…PTNQ), 413–439 (GNQN…NANG), and 572–660 (KTNT…TKES). Residues 207–220 (DGSNFNLNDPTNRN) are compositionally biased toward polar residues. Positions 269 to 314 (QSPAQPQQSSQQQIQQPQRQPQHQQQQQQQQQQQQQQQQQQQQQQQ) are enriched in low complexity. Polar residues-rich tracts occupy residues 330-347 (SENS…PTNQ), 421-439 (TRNN…NANG), and 572-585 (KTNT…STSV). The segment covering 590–643 (NNNNNNNNNNNNNNNSNNSNNNNNNNNSNNTPTVSQPSSKRTSSSSTTPNITTT) has biased composition (low complexity). Basic residues predominate over residues 646-655 (PKRKQRVGKT).

This sequence belongs to the MSS11 family. As to quaternary structure, interacts with FLO8, STE12 and TEC1.

It is found in the cytoplasm. The protein resides in the nucleus. In terms of biological role, transcription factor that regulates pseudohyphal differentiation, invasive growth, floculation, adhesion and starch metabolism in response to nutrient availability. The sequence is that of Transcription activator MSS11 (MSS11) from Saccharomyces cerevisiae (strain YJM789) (Baker's yeast).